Consider the following 820-residue polypeptide: MDLSSLPDPLRPTHSRLPARRRDRAEPPRFEQRALARLAAWMVCGLPLAALAQTDPGPGATAEPAPALRSSPLLQEKIPEDARPKLPIFVRGDHVSGQPDINATVEGNAELRRGDTIIHADRLDYAVPDDLAKARGNVRINRAGNVYEGSVLELQVDAFSGFFDDASYRFLANGAYGDARRVDFIDRDRALVHEATYTTCQKNDESTWKPAWIVRARSIKIDNAEQVGTAEGGVLEFQGVPILPVPGSFTFPLSDKRKTGLLPPTVGIDSVSGVVYSQPYYWNIAPNRDATITPMVMSKRGVSTSGEFRYLEPTYSGELRGDYMPSDRLRNRDRWALGLKHRGVFDTGIGGIGLNVDATRVSDDNYWRDFSTRTNGGISQLTQRLLPADATLFWGANDMSLSLRTLKWQTLQDVNARIVPPYDRMPQIHWGYMPSSLPGGFDGSVEADYTDFRADRALTGQPNARRSYAMAQFSRPFLAPAGFITPRLQFHATQYDFDSALPSTGRRTASRVLPTFSLDSGLVFERDARYFGRNFLQTLEPRAFYTYTPFRDQSMIPVYDTAANDFNFATIYTENGYSGSDRIADNNLLTLGVTTRLLDPEDGGEAARFGIAQRLRFSDQKVVMPGEAPVSERLSDVLVGAGINWTRQWGFDSTVQYNPKTSRSIRSTIGARYNPSDYRVINAAYRFQRGTSEQIDVGWQWPINDLWGDKGQNLGPGRGQGGGRWYSVGRLNYSLQDRKLVDTVIGFEYDSCCWIGRVVLERLQSSVTTATTRLLFQIEFVGFSRLSLGSDPIQTLKQNIPRYQYLREPVPPPSRFTNYD.

A disordered region spans residues 1–27 (MDLSSLPDPLRPTHSRLPARRRDRAEP). Residues 13-22 (THSRLPARRR) show a composition bias toward basic residues.

The protein belongs to the LptD family. In terms of assembly, component of the lipopolysaccharide transport and assembly complex. Interacts with LptE and LptA.

Together with LptE, is involved in the assembly of lipopolysaccharide (LPS) at the surface of the outer membrane. This is LPS-assembly protein LptD from Paracidovorax citrulli (strain AAC00-1) (Acidovorax citrulli).